Consider the following 512-residue polypeptide: Glycerol kinase (512 aa).

Thr-13 lines the ADP pocket. Residues Thr-13, Thr-14, and Ser-15 each contribute to the ATP site. Residue Thr-13 coordinates sn-glycerol 3-phosphate. An ADP-binding site is contributed by Arg-17. Sn-glycerol 3-phosphate-binding residues include Arg-83, Glu-84, Tyr-135, and Asp-252. 5 residues coordinate glycerol: Arg-83, Glu-84, Tyr-135, Asp-252, and Gln-253. ADP-binding residues include Thr-274 and Gly-318. ATP contacts are provided by Thr-274, Gly-318, Gln-322, and Gly-419. The ADP site is built by Gly-419 and Asn-423.

This sequence belongs to the FGGY kinase family.

The enzyme catalyses glycerol + ATP = sn-glycerol 3-phosphate + ADP + H(+). The protein operates within polyol metabolism; glycerol degradation via glycerol kinase pathway; sn-glycerol 3-phosphate from glycerol: step 1/1. Inhibited by fructose 1,6-bisphosphate (FBP). In terms of biological role, key enzyme in the regulation of glycerol uptake and metabolism. Catalyzes the phosphorylation of glycerol to yield sn-glycerol 3-phosphate. This is Glycerol kinase from Corynebacterium kroppenstedtii (strain DSM 44385 / JCM 11950 / CIP 105744 / CCUG 35717).